We begin with the raw amino-acid sequence, 20 residues long: Non-specific lipid-transfer protein (20 aa).

The protein belongs to the plant LTP family. In terms of tissue distribution, leaf.

Its function is as follows. Plant non-specific lipid-transfer proteins transfer phospholipids as well as galactolipids across membranes. May play a role in wax or cutin deposition in the cell walls of expanding epidermal cells and certain secretory tissues. The polypeptide is Non-specific lipid-transfer protein (Cannabis sativa (Hemp)).